We begin with the raw amino-acid sequence, 255 residues long: Cyclic di-GMP phosphodiesterase PdeH (255 aa).

The EAL domain occupies 13-255; sequence EASIESLQER…ETLNTAVLAL (243 aa).

It carries out the reaction 3',3'-c-di-GMP + H2O = 5'-phosphoguanylyl(3'-&gt;5')guanosine + H(+). Functionally, involved in the control of the switch from cell motility to adhesion via regulation of cellular levels of cyclic-di-GMP (c-di-GMP). Part of a signaling cascade that regulates curli biosynthesis. The cascade is composed of two c-di-GMP control modules, in which c-di-GMP controlled by the DgcE/PdeH pair (module I) regulates the activity of the DgcM/PdeR pair (module II), which in turn regulates activity of the transcription factor MlrA and expression of the master biofilm regulator csgD. Effect on flagella is controlled via the c-di-GMP-binding flagellar brake protein YcgR. The polypeptide is Cyclic di-GMP phosphodiesterase PdeH (Escherichia coli (strain K12)).